A 429-amino-acid polypeptide reads, in one-letter code: Enolase (429 aa).

Gln163 serves as a coordination point for (2R)-2-phosphoglycerate. Glu205 acts as the Proton donor in catalysis. 3 residues coordinate Mg(2+): Asp242, Glu287, and Asp314. Positions 339, 368, 369, and 390 each coordinate (2R)-2-phosphoglycerate. The active-site Proton acceptor is Lys339.

This sequence belongs to the enolase family. Requires Mg(2+) as cofactor.

The protein localises to the cytoplasm. It localises to the secreted. Its subcellular location is the cell surface. The catalysed reaction is (2R)-2-phosphoglycerate = phosphoenolpyruvate + H2O. It functions in the pathway carbohydrate degradation; glycolysis; pyruvate from D-glyceraldehyde 3-phosphate: step 4/5. Its function is as follows. Catalyzes the reversible conversion of 2-phosphoglycerate (2-PG) into phosphoenolpyruvate (PEP). It is essential for the degradation of carbohydrates via glycolysis. The chain is Enolase from Salinibacter ruber (strain DSM 13855 / M31).